Here is a 363-residue protein sequence, read N- to C-terminus: Type 3 secretion system translocon protein SctB (363 aa).

Residues 99-120 (ISSLSSNAVSLIISVAVLLSAL) form a helical membrane-spanning segment.

Belongs to the SctB/SipC family. In terms of assembly, the core secretion machinery of the T3SS is composed of approximately 20 different proteins, including cytoplasmic components, a base, an export apparatus and a needle. This subunit is involved in the formation of a pore, called the translocon, in host membrane.

The protein localises to the secreted. Its subcellular location is the host membrane. Its function is as follows. Component of the type III secretion system (T3SS), also called injectisome, which is used to inject bacterial effector proteins into eukaryotic host cells. IpaB/SctE and IpaC/SctB are inserted into the host membrane where they form a pore and allow the translocation of effector proteins into the cytosol of target cells. The sequence is that of Type 3 secretion system translocon protein SctB from Shigella dysenteriae.